A 430-amino-acid chain; its full sequence is 3-phosphoshikimate 1-carboxyvinyltransferase (430 aa).

Residues Lys-23, Ser-24, and Arg-28 each coordinate 3-phosphoshikimate. Lys-23 contacts phosphoenolpyruvate. Residues Gly-95 and Arg-123 each contribute to the phosphoenolpyruvate site. Residues Ser-169, Gln-171, Asp-315, and Lys-342 each contribute to the 3-phosphoshikimate site. A phosphoenolpyruvate-binding site is contributed by Gln-171. The active-site Proton acceptor is the Asp-315. Residues Arg-346 and Arg-388 each coordinate phosphoenolpyruvate.

The protein belongs to the EPSP synthase family. In terms of assembly, monomer.

The protein localises to the cytoplasm. The enzyme catalyses 3-phosphoshikimate + phosphoenolpyruvate = 5-O-(1-carboxyvinyl)-3-phosphoshikimate + phosphate. Its pathway is metabolic intermediate biosynthesis; chorismate biosynthesis; chorismate from D-erythrose 4-phosphate and phosphoenolpyruvate: step 6/7. In terms of biological role, catalyzes the transfer of the enolpyruvyl moiety of phosphoenolpyruvate (PEP) to the 5-hydroxyl of shikimate-3-phosphate (S3P) to produce enolpyruvyl shikimate-3-phosphate and inorganic phosphate. In Streptococcus pyogenes serotype M2 (strain MGAS10270), this protein is 3-phosphoshikimate 1-carboxyvinyltransferase.